The following is a 367-amino-acid chain: 2-aminoethylphosphonate--pyruvate transaminase (367 aa).

Lysine 193 carries the N6-(pyridoxal phosphate)lysine modification.

This sequence belongs to the class-V pyridoxal-phosphate-dependent aminotransferase family. PhnW subfamily. Homodimer. It depends on pyridoxal 5'-phosphate as a cofactor.

The enzyme catalyses (2-aminoethyl)phosphonate + pyruvate = phosphonoacetaldehyde + L-alanine. In terms of biological role, involved in phosphonate degradation. The protein is 2-aminoethylphosphonate--pyruvate transaminase of Vibrio vulnificus (strain CMCP6).